The sequence spans 186 residues: Acireductone dioxygenase (186 aa).

Residues H89, H91, E95, and H134 each contribute to the Fe(2+) site. Ni(2+) contacts are provided by H89, H91, E95, and H134.

The protein belongs to the acireductone dioxygenase (ARD) family. Fe(2+) is required as a cofactor. Ni(2+) serves as cofactor.

It is found in the cytoplasm. The protein resides in the nucleus. The catalysed reaction is 1,2-dihydroxy-5-(methylsulfanyl)pent-1-en-3-one + O2 = 4-methylsulfanyl-2-oxobutanoate + formate + 2 H(+). The enzyme catalyses 1,2-dihydroxy-5-(methylsulfanyl)pent-1-en-3-one + O2 = 3-(methylsulfanyl)propanoate + CO + formate + 2 H(+). It participates in amino-acid biosynthesis; L-methionine biosynthesis via salvage pathway; L-methionine from S-methyl-5-thio-alpha-D-ribose 1-phosphate: step 5/6. Functionally, catalyzes 2 different reactions between oxygen and the acireductone 1,2-dihydroxy-3-keto-5-methylthiopentene (DHK-MTPene) depending upon the metal bound in the active site. Fe-containing acireductone dioxygenase (Fe-ARD) produces formate and 2-keto-4-methylthiobutyrate (KMTB), the alpha-ketoacid precursor of methionine in the methionine recycle pathway. Ni-containing acireductone dioxygenase (Ni-ARD) produces methylthiopropionate, carbon monoxide and formate, and does not lie on the methionine recycle pathway. This Drosophila melanogaster (Fruit fly) protein is Acireductone dioxygenase.